The sequence spans 144 residues: MNIQVINKSKHPLPAYATELSAGMDIRANISEPISLAPMQRCLVPTGLFIALPQGFEAQIRPRSGLALKKGITVLNSPGTIDADYRGEICIILVNLSAETFVIEDGERIAQMVIARHEQAVWKEVEVLDETERGAGGFGHTGRG.

Substrate is bound by residues 63 to 65 (RSG), asparagine 76, and 80 to 82 (TID).

The protein belongs to the dUTPase family. Requires Mg(2+) as cofactor.

It carries out the reaction dUTP + H2O = dUMP + diphosphate + H(+). The protein operates within pyrimidine metabolism; dUMP biosynthesis; dUMP from dCTP (dUTP route): step 2/2. Its function is as follows. This enzyme is involved in nucleotide metabolism: it produces dUMP, the immediate precursor of thymidine nucleotides and it decreases the intracellular concentration of dUTP so that uracil cannot be incorporated into DNA. This is Deoxyuridine 5'-triphosphate nucleotidohydrolase from Bacteroides fragilis (strain YCH46).